We begin with the raw amino-acid sequence, 157 residues long: Thiosulfate sulfurtransferase/rhodanese-like domain-containing protein 3 (157 aa).

A Rhodanese domain is found at 52 to 154; sequence NSKDIMLIDV…WVTYEISEEK (103 aa). An N6-succinyllysine modification is found at K96. The active-site Cysteine persulfide intermediate is C114.

The sequence is that of Thiosulfate sulfurtransferase/rhodanese-like domain-containing protein 3 (Tstd3) from Mus musculus (Mouse).